The sequence spans 454 residues: Carbon catabolite repressor protein 4 homolog 5 (454 aa).

The segment at Met-1–Glu-76 is disordered. Basic and acidic residues predominate over residues Val-31 to Ile-41. A compositionally biased stretch (basic residues) spans Val-61–Lys-75. Glu-153 is a Mg(2+) binding site.

This sequence belongs to the CCR4/nocturin family. As to quaternary structure, component of the CCR4-NOT complex, at least composed of CRR4 and CAF1 proteins. Mg(2+) serves as cofactor.

It localises to the nucleus. It is found in the cytoplasm. The catalysed reaction is Exonucleolytic cleavage of poly(A) to 5'-AMP.. In terms of biological role, acts as a catalytic component of the CCR4-NOT core complex, which in the nucleus seems to be a general transcription factor, and in the cytoplasm the major mRNA deadenylase involved in mRNA turnover. The polypeptide is Carbon catabolite repressor protein 4 homolog 5 (CCR4-5) (Arabidopsis thaliana (Mouse-ear cress)).